The primary structure comprises 511 residues: MEEFQRYIELDRSWQYNFFYPLIFQEYIYGFAYDHGLNKSILLENAGDKKYSLLIVKRLITRMYQQNHLSLSANHSNQNDFFGHKHKKNLYYQIISEGFAVIVEIPFSLLLISYLEAKEKKIVKSHNLQSIHSIFPFFEDKFLHLNFLLEILIPYPIHLEILVQTLRYWVKDASSLHLLRFFLYEYRNWNSLITPQKSISFFSKRNQRLFLFLYNFYVCEYESIFLFLCNQSSHLRSTSFGALLERIYFYGKLEYLVKVKTFTNTQDFRVILWLFKDPFLHYVRYRGKSILASKGTSLLMHKWKYYLINFWQCHFSLWSQPRRIYINRLSKHSLDFMGFFSSVRLNSSVVRSQMVENSFLIDNPIKKFDTIVRIIPLVGSLAKAKFCTVLGHPISKSVWTDLLDSDIIDRFGRICRNLSHYYSGSSRKKSLYRIKYILRLSCARTLARKHKSTVRAFLKRLGSEFLEEFFTEEEKVLSLILPRDSSISRGLYRGPFWYLDIICIHDLANYE.

This sequence belongs to the intron maturase 2 family. MatK subfamily.

It localises to the plastid. The protein resides in the chloroplast. Usually encoded in the trnK tRNA gene intron. Probably assists in splicing its own and other chloroplast group II introns. The polypeptide is Maturase K (Maihuenia poeppigii (Hardy cactus)).